The sequence spans 260 residues: Membrane protein insertase YidC 1 (260 aa).

The N-terminal stretch at 1 to 22 (MLKSYRAVLVSLSLLLVFVLSG) is a signal peptide. Residue Cys23 is the site of N-palmitoyl cysteine attachment. Cys23 carries S-diacylglycerol cysteine lipidation. 5 helical membrane passes run 29–49 (IDAH…SFMI), 52–72 (VAHH…TLVI), 133–153 (LAGC…YYAI), 164–184 (FLWV…IAAL), and 213–233 (MPAM…LYWI).

This sequence belongs to the OXA1/ALB3/YidC family. Type 2 subfamily.

The protein localises to the cell membrane. Its function is as follows. Required for the insertion and/or proper folding and/or complex formation of integral membrane proteins into the membrane. Involved in integration of membrane proteins that insert both dependently and independently of the Sec translocase complex, as well as at least some lipoproteins. This chain is Membrane protein insertase YidC 1, found in Bacillus anthracis.